A 526-amino-acid polypeptide reads, in one-letter code: Cholesterol side-chain cleavage enzyme, mitochondrial (526 aa).

A mitochondrion-targeting transit peptide spans Met-1–Gly-36. Cys-459 is a binding site for heme.

The protein belongs to the cytochrome P450 family. Interacts with FDX1/adrenodoxin. Heme serves as cofactor. In terms of tissue distribution, expressed in the kidney where it localizes to the distal convoluted tubule and the thick ascending limb of the loop of Henle (at protein level). In the ovary, highly expressed in interstitial cells (at protein level). Also expressed in adrenal gland and testis.

It is found in the mitochondrion inner membrane. The catalysed reaction is 6 reduced [adrenodoxin] + cholesterol + 3 O2 + 6 H(+) = 4-methylpentanal + pregnenolone + 6 oxidized [adrenodoxin] + 4 H2O. The enzyme catalyses 2 reduced [adrenodoxin] + cholesterol + O2 + 2 H(+) = (22R)-hydroxycholesterol + 2 oxidized [adrenodoxin] + H2O. It catalyses the reaction (22R)-hydroxycholesterol + 2 reduced [adrenodoxin] + O2 + 2 H(+) = (20R,22R)-20,22-dihydroxycholesterol + 2 oxidized [adrenodoxin] + H2O. It carries out the reaction (20R,22R)-20,22-dihydroxycholesterol + 2 reduced [adrenodoxin] + O2 + 2 H(+) = 4-methylpentanal + pregnenolone + 2 oxidized [adrenodoxin] + 2 H2O. Its pathway is lipid metabolism; C21-steroid hormone metabolism. It functions in the pathway steroid metabolism; cholesterol metabolism. Functionally, a cytochrome P450 monooxygenase that catalyzes the side-chain hydroxylation and cleavage of cholesterol to pregnenolone, the precursor of most steroid hormones. Catalyzes three sequential oxidation reactions of cholesterol, namely the hydroxylation at C22 followed with the hydroxylation at C20 to yield 20R,22R-hydroxycholesterol that is further cleaved between C20 and C22 to yield the C21-steroid pregnenolone and 4-methylpentanal. Mechanistically, uses molecular oxygen inserting one oxygen atom into a substrate and reducing the second into a water molecule. Two electrons are provided by NADPH via a two-protein mitochondrial transfer system comprising flavoprotein FDXR (adrenodoxin/ferredoxin reductase) and nonheme iron-sulfur protein FDX1 or FDX2 (adrenodoxin/ferredoxin). In Rattus norvegicus (Rat), this protein is Cholesterol side-chain cleavage enzyme, mitochondrial.